Here is a 1151-residue protein sequence, read N- to C-terminus: Nardilysin (1151 aa).

The N-terminal stretch at 1–20 (MLRRVTVAAVCATRRKLCEA) is a signal peptide. Disordered regions lie at residues 53-108 (RNKA…KSPS) and 133-207 (MEGK…KKTT). Residues Ser86, Ser94, and Ser96 each carry the phosphoserine modification. Residues 141–198 (TDDEEEEEVEEEEEDDDEDSGAEIEDDDEEGFDDEDEFDDEHDDDLDTEDNELEELEE) show a composition bias toward acidic residues. His233 lines the Zn(2+) pocket. Glu236 acts as the Proton acceptor in catalysis. Positions 237 and 314 each coordinate Zn(2+).

This sequence belongs to the peptidase M16 family. In terms of assembly, interacts with BACE1 and NRG1. Zn(2+) serves as cofactor. In terms of tissue distribution, primarily in adult heart, skeletal muscle, and testis and at much lower levels in other tissues.

Its subcellular location is the mitochondrion. It localises to the cell projection. It is found in the dendrite. It carries out the reaction Hydrolysis of polypeptides, preferably at -Xaa-|-Arg-Lys-, and less commonly at -Arg-|-Arg-Xaa-, in which Xaa is not Arg or Lys.. In terms of biological role, cleaves peptide substrates on the N-terminus of arginine residues in dibasic pairs. Is a critical activator of BACE1- and ADAM17-mediated pro-neuregulin ectodomain shedding, involved in the positive regulation of axonal maturation and myelination. Required for proper functioning of 2-oxoglutarate dehydrogenase (OGDH). This chain is Nardilysin, found in Homo sapiens (Human).